A 196-amino-acid chain; its full sequence is dTTP/UTP pyrophosphatase (196 aa).

The Proton acceptor role is filled by Asp-72.

This sequence belongs to the Maf family. YhdE subfamily. Requires a divalent metal cation as cofactor.

It localises to the cytoplasm. The catalysed reaction is dTTP + H2O = dTMP + diphosphate + H(+). It carries out the reaction UTP + H2O = UMP + diphosphate + H(+). Its function is as follows. Nucleoside triphosphate pyrophosphatase that hydrolyzes dTTP and UTP. May have a dual role in cell division arrest and in preventing the incorporation of modified nucleotides into cellular nucleic acids. The sequence is that of dTTP/UTP pyrophosphatase from Chlamydia felis (strain Fe/C-56) (Chlamydophila felis).